Reading from the N-terminus, the 369-residue chain is MKIAEIHVYAHDLPVKDGPYTIASSTVWSLQTTLVKIVADSGLAGWGETCPVGPTYAPSHALGARAALAEMAPGLIGANPLQPLVLRRRMDGLLCGHNYAKAAIDIAAYDLMGKHYGVRVADLLGGVAAERVPSYYATGIGQPDEIARIAAEKVAEGFPRLQIKIGGRPVEIDIETVRKVWERIRGTGTRLAVDGNRSLPSRDALRLSRECPEIPFVLEQPCNTLEEIAAIRGRVQHGIYLDESGEDLSTVIRAAGQGLCDGFGMKLTRIGGLQQMAAFRDICEARALPHSCDDAWGGDIIAAACTHIGATVQPRLNEGVWVAQPYIAQPYDEENGIRIAGGHIDLPKGPGLGITPDESLFGPPVASFS.

Residues Y56 and Q162 each contribute to the substrate site. K164 serves as the catalytic Proton donor/acceptor. Residues D194, E219, and D242 each contribute to the Mg(2+) site. The active-site Proton donor/acceptor is the K266. A substrate-binding site is contributed by A295.

This sequence belongs to the mandelate racemase/muconate lactonizing enzyme family. Mg(2+) is required as a cofactor.

It carries out the reaction trans-4-hydroxy-L-proline betaine = cis-4-hydroxy-D-proline betaine. It catalyses the reaction L-proline betaine = D-proline betaine. Functionally, catalyzes the 2-epimerization of trans-4-hydroxy-L-proline betaine (tHyp-B) to cis-4-hydroxy-D-proline betaine (cHyp-B). Is involved in a catabolic pathway that degrades tHyp-B to alpha-ketoglutarate. This pathway would permit the utilization of tHyp-B as a carbon and nitrogen source in the absence of osmotic stress, since tHyp-B functions as an osmolyte and is not catabolized when it is needed as osmoprotectant. Can also catalyze the racemization of L-proline betaine. The polypeptide is 4-hydroxyproline betaine 2-epimerase (hpbD) (Paracoccus denitrificans (strain Pd 1222)).